Consider the following 531-residue polypeptide: MKAESSNESFIIGQRVHSLNDSRRVGTVKYVGDVEGYSGTWIGVDWDQDGDGKHNGSVNGVFYFNGRSQSSASFVRSQNLSRGITLLQALELRYRTISTKDEEDEMYVLSAGNRRVSIQLLGGDKIQDKLSRFEELTSASLSYLGVSSLGVSSDLGSILPNLKLLDLTGNLISDWEEIGALCEQLPALTTLNLSCNSLSSDIKSLPQLKNIRVLVLNNSGLSWTQVEILRRSLPGIEELHLMGNMISTITSTSSSDDQAFNSLRLLNLDDNCISDWSEVLKLSQLPCLEQLYLNKNKLSRIFQSVNGTESSEKGSDPFPSLSCLLLGANNIGDLASVDALNGFPQLVDIRLSENPISDPVRGGVPRFVLVARLTKVQVLNGSEVRAREKKDSEIRYVRMVMSKLNDKSGEIELLHPRFYELKKLHGIEDERASAENSGPKNIASGLISITLKCVGPSMGEKPHLTKKLPGSITVGKLKILSENFFKLKSIKPRLFLQEEGSPFPTALDDETATLLDVGICDGSTLLVDEES.

Positions 32-76 (GDVEGYSGTWIGVDWDQDGDGKHNGSVNGVFYFNGRSQSSASFVR) constitute a CAP-Gly domain. LRR repeat units lie at residues 84–109 (ITLL…MYVL), 159–183 (LPNL…ALCE), 185–213 (LPAL…NIRV), 233–256 (LPGI…SSSD), 260–284 (FNSL…KLSQ), 285–308 (LPCL…VNGT), 318–342 (FPSL…ALNG), 344–366 (PQLV…GVPR), and 474–497 (VGKL…LFLQ).

The protein belongs to the TBCE family. Supercomplex made of cofactors A to E. Cofactors A and D function by capturing and stabilizing tubulin in a quasi-native conformation. Cofactor E binds to the cofactor D-tubulin complex; interaction with cofactor C then causes the release of tubulin polypeptides that are committed to the native state.

It is found in the cytoplasm. Its function is as follows. Essential tubulin-folding protein involved in the tubulin folding pathway. Not essential for cell viability. Probably involved in the binding of alpha-tubulin in the multimeric supercomplex. This is Tubulin-folding cofactor E (TFCE) from Arabidopsis thaliana (Mouse-ear cress).